A 936-amino-acid polypeptide reads, in one-letter code: Isoleucine--tRNA ligase (936 aa).

Positions 58-68 match the 'HIGH' region motif; it reads PYANGRAHLGT. L-isoleucyl-5'-AMP is bound at residue glutamate 561. Positions 602-606 match the 'KMSKS' region motif; that stretch reads KMSKS. Lysine 605 contacts ATP. Residues cysteine 899, cysteine 902, cysteine 919, and cysteine 922 each coordinate Zn(2+).

This sequence belongs to the class-I aminoacyl-tRNA synthetase family. IleS type 1 subfamily. In terms of assembly, monomer. Requires Zn(2+) as cofactor.

It localises to the cytoplasm. It catalyses the reaction tRNA(Ile) + L-isoleucine + ATP = L-isoleucyl-tRNA(Ile) + AMP + diphosphate. Functionally, catalyzes the attachment of isoleucine to tRNA(Ile). As IleRS can inadvertently accommodate and process structurally similar amino acids such as valine, to avoid such errors it has two additional distinct tRNA(Ile)-dependent editing activities. One activity is designated as 'pretransfer' editing and involves the hydrolysis of activated Val-AMP. The other activity is designated 'posttransfer' editing and involves deacylation of mischarged Val-tRNA(Ile). The sequence is that of Isoleucine--tRNA ligase from Coxiella burnetii (strain CbuK_Q154) (Coxiella burnetii (strain Q154)).